A 965-amino-acid chain; its full sequence is UvrABC system protein A (965 aa).

32-39 (GLSGSGKS) contacts ATP. The segment at 254–281 (CPVCDYSLPELEPRLFSFNAPMGACPAC) adopts a C4-type zinc-finger fold. 2 ABC transporter domains span residues 311–588 (WDRR…PRSL) and 608–937 (PNAT…HFLA). An ATP-binding site is contributed by 641 to 648 (GVSGSGKS). The C4-type zinc-finger motif lies at 740 to 766 (CEACEGDGLIKVEMHFLPDVYVPCDVC).

This sequence belongs to the ABC transporter superfamily. UvrA family. In terms of assembly, forms a heterotetramer with UvrB during the search for lesions.

The protein resides in the cytoplasm. In terms of biological role, the UvrABC repair system catalyzes the recognition and processing of DNA lesions. UvrA is an ATPase and a DNA-binding protein. A damage recognition complex composed of 2 UvrA and 2 UvrB subunits scans DNA for abnormalities. When the presence of a lesion has been verified by UvrB, the UvrA molecules dissociate. The chain is UvrABC system protein A from Xylella fastidiosa (strain 9a5c).